The following is a 137-amino-acid chain: Nucleoside diphosphate kinase (137 aa).

Residues lysine 9, phenylalanine 57, arginine 85, threonine 91, arginine 102, and asparagine 112 each contribute to the ATP site. Catalysis depends on histidine 115, which acts as the Pros-phosphohistidine intermediate.

It belongs to the NDK family. As to quaternary structure, homotetramer. The cofactor is Mg(2+).

The protein resides in the cytoplasm. It catalyses the reaction a 2'-deoxyribonucleoside 5'-diphosphate + ATP = a 2'-deoxyribonucleoside 5'-triphosphate + ADP. The enzyme catalyses a ribonucleoside 5'-diphosphate + ATP = a ribonucleoside 5'-triphosphate + ADP. Its function is as follows. Major role in the synthesis of nucleoside triphosphates other than ATP. The ATP gamma phosphate is transferred to the NDP beta phosphate via a ping-pong mechanism, using a phosphorylated active-site intermediate. This is Nucleoside diphosphate kinase from Leptospira biflexa serovar Patoc (strain Patoc 1 / ATCC 23582 / Paris).